A 309-amino-acid chain; its full sequence is Ornithine carbamoyltransferase (309 aa).

Residues 56–59 (STRT), Q83, R107, and 134–137 (HPCQ) contribute to the carbamoyl phosphate site. Residues N165, D223, and 227–228 (SM) contribute to the L-ornithine site. Carbamoyl phosphate contacts are provided by residues 263–264 (CL) and R291.

It belongs to the aspartate/ornithine carbamoyltransferase superfamily. OTCase family.

The protein localises to the cytoplasm. It catalyses the reaction carbamoyl phosphate + L-ornithine = L-citrulline + phosphate + H(+). The protein operates within amino-acid biosynthesis; L-arginine biosynthesis; L-arginine from L-ornithine and carbamoyl phosphate: step 1/3. Functionally, reversibly catalyzes the transfer of the carbamoyl group from carbamoyl phosphate (CP) to the N(epsilon) atom of ornithine (ORN) to produce L-citrulline. This is Ornithine carbamoyltransferase from Burkholderia mallei (strain ATCC 23344).